We begin with the raw amino-acid sequence, 277 residues long: ATP synthase subunit delta (277 aa).

This sequence belongs to the ATPase delta chain family. As to quaternary structure, F-type ATPases have 2 components, F(1) - the catalytic core - and F(0) - the membrane proton channel. F(1) has five subunits: alpha(3), beta(3), gamma(1), delta(1), epsilon(1). F(0) has three main subunits: a(1), b(2) and c(10-14). The alpha and beta chains form an alternating ring which encloses part of the gamma chain. F(1) is attached to F(0) by a central stalk formed by the gamma and epsilon chains, while a peripheral stalk is formed by the delta and b chains.

Its subcellular location is the cell membrane. Functionally, f(1)F(0) ATP synthase produces ATP from ADP in the presence of a proton or sodium gradient. F-type ATPases consist of two structural domains, F(1) containing the extramembraneous catalytic core and F(0) containing the membrane proton channel, linked together by a central stalk and a peripheral stalk. During catalysis, ATP synthesis in the catalytic domain of F(1) is coupled via a rotary mechanism of the central stalk subunits to proton translocation. This protein is part of the stalk that links CF(0) to CF(1). It either transmits conformational changes from CF(0) to CF(1) or is implicated in proton conduction. The protein is ATP synthase subunit delta of Frankia alni (strain DSM 45986 / CECT 9034 / ACN14a).